Here is an 879-residue protein sequence, read N- to C-terminus: DNA methyltransferase A (879 aa).

This sequence belongs to the methyltransferase superfamily.

It catalyses the reaction a 2'-deoxyadenosine in DNA + S-adenosyl-L-methionine = an N(6)-methyl-2'-deoxyadenosine in DNA + S-adenosyl-L-homocysteine + H(+). Functionally, recognizes the double-stranded sequence 5'-GACGAG-3' and methylates A-5, yielding m6A. m6A methylation functions as a transcriptional modifier, promoting transcription of a number of genes (at least scpA, hbs, rnhC, yumC and zapA). One studied mechanism is via transcriptional repressor ScoC (also called hpr) which binds to non-methylated scpA promoter; when the m6A target is methylated ScoC no longer binds and scpA transcription is up-regulated. Other mechanisms for gene expression regulation probably exist. Binds DNA with and without the target sequence. Although it resembles a restriction-modification system, it does not have detectable endonuclease activity under tested conditions. A gamma subtype methylase. This is DNA methyltransferase A from Bacillus subtilis (strain 168).